The primary structure comprises 327 residues: Phosphate acyltransferase (327 aa).

The protein belongs to the PlsX family. In terms of assembly, homodimer. Probably interacts with PlsY.

The protein localises to the cytoplasm. The catalysed reaction is a fatty acyl-[ACP] + phosphate = an acyl phosphate + holo-[ACP]. Its pathway is lipid metabolism; phospholipid metabolism. Catalyzes the reversible formation of acyl-phosphate (acyl-PO(4)) from acyl-[acyl-carrier-protein] (acyl-ACP). This enzyme utilizes acyl-ACP as fatty acyl donor, but not acyl-CoA. In Thermotoga maritima (strain ATCC 43589 / DSM 3109 / JCM 10099 / NBRC 100826 / MSB8), this protein is Phosphate acyltransferase.